The sequence spans 376 residues: Actin-like protein 53D (376 aa).

The necessary and sufficient for recruitment to the fusome and actin cones of spermatocyte cysts stretch occupies residues 1 to 40 (MSSEVDSNSHHAAVVIDNGSGVCKAGFSPEDTPRAVFPSI).

Belongs to the actin family. ARP1 subfamily. In terms of tissue distribution, high expression in males whereas expression in females is very low. In adult males, highest levels of expression are in the testis. In adult females, expressed only in the ovaries at very low levels. In larvae, highly expressed in the imaginal disk whereas in prepupae and pupae modest levels of expression occur in the fat body.

The protein localises to the cytoplasm. The protein resides in the cytoskeleton. Required for optimal embryo development, particularly under heat stress conditions. Also appears to have a role in negatively regulating spermatocyte cyst development. Under heat stress conditions, required for the correct organization and migration of nuclei during early embryogenesis, and therefore possibly functions by regulating embryonic actin networks during the heat stress response. The chain is Actin-like protein 53D from Drosophila melanogaster (Fruit fly).